Here is a 62-residue protein sequence, read N- to C-terminus: Defensin BmKDfsin6 (62 aa).

Positions 1–24 (MKVIAILFLLAFVLCTMEITMVEA) are cleaved as a signal peptide. Intrachain disulfides connect Cys28-Cys49, Cys35-Cys57, and Cys39-Cys59.

This sequence belongs to the invertebrate defensin family. Type 2 subfamily. As to expression, highly expressed in non-venom gland (hemolymph) and moderately expressed in venom gland.

The protein resides in the secreted. Functionally, antibacterial peptide active against Gram-positive bacteria, but not on Gram-negative bacteria. Also has weak blocking activity on Kv1.1/KCNA1, Kv1.2/KCNA2, Kv1.3/KCNA3, KCa3.1/KCNN4/IK, KCa2.3/KCNN3/SK3 and Kv11.1/KCNH2/ERG1 channels (tested at 1 uM). It inhibits potassium channel current by interacting with the pore region. This is Defensin BmKDfsin6 from Olivierus martensii (Manchurian scorpion).